The chain runs to 416 residues: Exodeoxyribonuclease 7 large subunit (416 aa).

The interval 1-21 (MTEPDSKPKKGRAGRKKAEPV) is disordered.

This sequence belongs to the XseA family. As to quaternary structure, heterooligomer composed of large and small subunits.

The protein localises to the cytoplasm. The enzyme catalyses Exonucleolytic cleavage in either 5'- to 3'- or 3'- to 5'-direction to yield nucleoside 5'-phosphates.. In terms of biological role, bidirectionally degrades single-stranded DNA into large acid-insoluble oligonucleotides, which are then degraded further into small acid-soluble oligonucleotides. The polypeptide is Exodeoxyribonuclease 7 large subunit (Deinococcus radiodurans (strain ATCC 13939 / DSM 20539 / JCM 16871 / CCUG 27074 / LMG 4051 / NBRC 15346 / NCIMB 9279 / VKM B-1422 / R1)).